Reading from the N-terminus, the 309-residue chain is Small ribosomal subunit protein mS23 (309 aa).

Belongs to the mitochondrion-specific ribosomal protein mS23 family. In terms of assembly, component of the mitochondrial small ribosomal subunit.

The protein resides in the mitochondrion. The protein is Small ribosomal subunit protein mS23 (RSM25) of Lodderomyces elongisporus (strain ATCC 11503 / CBS 2605 / JCM 1781 / NBRC 1676 / NRRL YB-4239) (Yeast).